The following is a 110-amino-acid chain: Phosphoribosyl-ATP pyrophosphatase (110 aa).

Belongs to the PRA-PH family.

It is found in the cytoplasm. It catalyses the reaction 1-(5-phospho-beta-D-ribosyl)-ATP + H2O = 1-(5-phospho-beta-D-ribosyl)-5'-AMP + diphosphate + H(+). It functions in the pathway amino-acid biosynthesis; L-histidine biosynthesis; L-histidine from 5-phospho-alpha-D-ribose 1-diphosphate: step 2/9. The polypeptide is Phosphoribosyl-ATP pyrophosphatase (Pseudomonas savastanoi pv. phaseolicola (strain 1448A / Race 6) (Pseudomonas syringae pv. phaseolicola (strain 1448A / Race 6))).